Here is an 894-residue protein sequence, read N- to C-terminus: DNA mismatch repair protein MutS (894 aa).

629-636 (GPNMGGKS) contributes to the ATP binding site. The interval 819 to 840 (TPTPQLDLFAPPPHPDTSDDDE) is disordered.

Belongs to the DNA mismatch repair MutS family.

Its function is as follows. This protein is involved in the repair of mismatches in DNA. It is possible that it carries out the mismatch recognition step. This protein has a weak ATPase activity. This is DNA mismatch repair protein MutS from Cupriavidus pinatubonensis (strain JMP 134 / LMG 1197) (Cupriavidus necator (strain JMP 134)).